A 484-amino-acid polypeptide reads, in one-letter code: Glutamate--tRNA ligase (484 aa).

The short motif at 11–21 (PSPTGLLHIGN) is the 'HIGH' region element. The 'KMSKS' region motif lies at 255–259 (KLSKR). Lys-258 is an ATP binding site.

The protein belongs to the class-I aminoacyl-tRNA synthetase family. Glutamate--tRNA ligase type 1 subfamily. Monomer.

The protein localises to the cytoplasm. The enzyme catalyses tRNA(Glu) + L-glutamate + ATP = L-glutamyl-tRNA(Glu) + AMP + diphosphate. Catalyzes the attachment of glutamate to tRNA(Glu) in a two-step reaction: glutamate is first activated by ATP to form Glu-AMP and then transferred to the acceptor end of tRNA(Glu). This is Glutamate--tRNA ligase from Streptococcus agalactiae serotype Ia (strain ATCC 27591 / A909 / CDC SS700).